We begin with the raw amino-acid sequence, 489 residues long: WRKY transcription factor 72B (489 aa).

Disordered regions lie at residues Met-1–Glu-100, Gln-131–Asp-159, and Asp-234–Val-267. Basic and acidic residues-rich tracts occupy residues Gly-32–Met-52 and Thr-83–Glu-100. Positions His-84–Lys-132 form a coiled coil. Over residues Ser-138–Thr-147 the composition is skewed to low complexity. The WRKY DNA-binding region spans Cys-273 to Pro-339. Disordered regions lie at residues Leu-356 to Thr-381 and Thr-427 to Asn-454. 2 stretches are compositionally biased toward low complexity: residues Thr-371–Thr-381 and Thr-427–Ser-438.

The protein belongs to the WRKY group II-b family.

The protein resides in the nucleus. In association with WRKY72A, contributes to basal defense against root-knot nematodes (RKNs) and potato aphids, as well as Mi-1-mediated gene-for-gene resistance to these pests. Both WRKY72A and WRKY72B are not required for gene-for-gene resistance mediated by Pto, another tomato R gene. The sequence is that of WRKY transcription factor 72B from Solanum lycopersicum (Tomato).